The sequence spans 143 residues: MGRHYEIVLLVHPDQSEQVQAMLERYKALIENGHGKIHRLEDWGRRQLAYPIQKLVKAHYLMMNIEVEQSVLNELVDLFRFNDAILRHLAIKRSGPDTEQSFIMKSKDDKGDKPERRRRDDDENGDVGVSNDSDNDGGNAEAA.

The segment at G95 to A143 is disordered. The segment covering K105 to D121 has biased composition (basic and acidic residues).

Belongs to the bacterial ribosomal protein bS6 family.

Its function is as follows. Binds together with bS18 to 16S ribosomal RNA. This Xylella fastidiosa (strain M23) protein is Small ribosomal subunit protein bS6.